A 227-amino-acid polypeptide reads, in one-letter code: Glutathione S-transferase U27 (227 aa).

Residues 4–84 (EEVVVLNFWP…YIDEVWKDDK (81 aa)) form the GST N-terminal domain. Glutathione-binding positions include 14–15 (SM), 41–42 (QK), 55–56 (KI), and 68–69 (ES). The region spanning 92–217 (DPYQKSQCRF…LKIFDRVTQI (126 aa)) is the GST C-terminal domain.

The protein belongs to the GST superfamily. Tau family.

It localises to the cytoplasm. It is found in the cytosol. The enzyme catalyses RX + glutathione = an S-substituted glutathione + a halide anion + H(+). Functionally, may be involved in the conjugation of reduced glutathione to a wide number of exogenous and endogenous hydrophobic electrophiles and have a detoxification role against certain herbicides. The sequence is that of Glutathione S-transferase U27 (GSTU27) from Arabidopsis thaliana (Mouse-ear cress).